The following is a 357-amino-acid chain: tRNA-specific 2-thiouridylase MnmA (357 aa).

ATP-binding positions include 11–18 (AMSGGVDS) and L37. C102 functions as the Nucleophile in the catalytic mechanism. Residues C102 and C197 are joined by a disulfide bond. G126 is a binding site for ATP. An interaction with tRNA region spans residues 148-150 (KDQ). C197 (cysteine persulfide intermediate) is an active-site residue. The tract at residues 301-302 (RY) is interaction with tRNA.

The protein belongs to the MnmA/TRMU family.

Its subcellular location is the cytoplasm. The catalysed reaction is S-sulfanyl-L-cysteinyl-[protein] + uridine(34) in tRNA + AH2 + ATP = 2-thiouridine(34) in tRNA + L-cysteinyl-[protein] + A + AMP + diphosphate + H(+). Functionally, catalyzes the 2-thiolation of uridine at the wobble position (U34) of tRNA, leading to the formation of s(2)U34. This is tRNA-specific 2-thiouridylase MnmA from Dehalococcoides mccartyi (strain ATCC BAA-2266 / KCTC 15142 / 195) (Dehalococcoides ethenogenes (strain 195)).